We begin with the raw amino-acid sequence, 90 residues long: uncharacterized protein (90 aa).

A signal peptide spans methionine 1–serine 18. The segment at glutamine 28 to proline 50 is disordered.

It is found in the secreted. This is an uncharacterized protein from Homo sapiens (Human).